Consider the following 238-residue polypeptide: Survival of motor neuron-related-splicing factor 30 (238 aa).

Residues 72 to 132 (SWKVGEKCMA…RPVEEGRKAK (61 aa)) form the Tudor domain. A Nuclear localization signal motif is present at residues 142–160 (KKEMIAAQREYKKKKALKK).

The protein belongs to the SMN family. As to quaternary structure, associates with spliceosomes.

The protein localises to the nucleus speckle. The protein resides in the nucleus. It localises to the cajal body. Involved in spliceosome assembly. The chain is Survival of motor neuron-related-splicing factor 30 (smndc1) from Xenopus tropicalis (Western clawed frog).